The sequence spans 146 residues: Phosphoribosyl-AMP cyclohydrolase (146 aa).

Residue Asp95 participates in Mg(2+) binding. Cys96 is a Zn(2+) binding site. Positions 97 and 99 each coordinate Mg(2+). Zn(2+) contacts are provided by Cys112 and Cys119.

It belongs to the PRA-CH family. As to quaternary structure, homodimer. It depends on Mg(2+) as a cofactor. The cofactor is Zn(2+).

The protein resides in the cytoplasm. It catalyses the reaction 1-(5-phospho-beta-D-ribosyl)-5'-AMP + H2O = 1-(5-phospho-beta-D-ribosyl)-5-[(5-phospho-beta-D-ribosylamino)methylideneamino]imidazole-4-carboxamide. It participates in amino-acid biosynthesis; L-histidine biosynthesis; L-histidine from 5-phospho-alpha-D-ribose 1-diphosphate: step 3/9. In terms of biological role, catalyzes the hydrolysis of the adenine ring of phosphoribosyl-AMP. The polypeptide is Phosphoribosyl-AMP cyclohydrolase (Chromohalobacter salexigens (strain ATCC BAA-138 / DSM 3043 / CIP 106854 / NCIMB 13768 / 1H11)).